Here is a 94-residue protein sequence, read N- to C-terminus: Integration host factor subunit beta (94 aa).

The protein belongs to the bacterial histone-like protein family. As to quaternary structure, heterodimer of an alpha and a beta chain.

Its function is as follows. This protein is one of the two subunits of integration host factor, a specific DNA-binding protein that functions in genetic recombination as well as in transcriptional and translational control. The sequence is that of Integration host factor subunit beta from Actinobacillus succinogenes (strain ATCC 55618 / DSM 22257 / CCUG 43843 / 130Z).